The sequence spans 340 residues: Putative methionyl-tRNA formyltransferase (340 aa).

The protein belongs to the Fmt family.

The protein resides in the mitochondrion. The protein localises to the mitochondrion matrix. Its subcellular location is the cytoplasm. The enzyme catalyses L-methionyl-tRNA(fMet) + (6R)-10-formyltetrahydrofolate = N-formyl-L-methionyl-tRNA(fMet) + (6S)-5,6,7,8-tetrahydrofolate + H(+). Functionally, formylates methionyl-tRNA in mitochondria and the cytoplasm. Responsible for the formylation of the N-terminally formylated (Nt-formylated) mitochondrial matrix proteins that are encoded by mitochondrial DNA. Nt-formylated proteins in the cytoplasm are strongly up-regulated in stationary phase or upon starvation for specific amino acids and are targeted for degradation by an E3 ubiquitin ligase-mediated fMet/N-end rule pathway. Increased Nt-formylation of cytosolic proteins appears to be important for adaptation to these stresses. The protein is Putative methionyl-tRNA formyltransferase (fmt1) of Schizosaccharomyces pombe (strain 972 / ATCC 24843) (Fission yeast).